Consider the following 161-residue polypeptide: ATP synthase subunit b 1 (161 aa).

Residues 6–26 traverse the membrane as a helical segment; that stretch reads ETWVAIAFVILMVVFGYLGVF.

Belongs to the ATPase B chain family. F-type ATPases have 2 components, F(1) - the catalytic core - and F(0) - the membrane proton channel. F(1) has five subunits: alpha(3), beta(3), gamma(1), delta(1), epsilon(1). F(0) has three main subunits: a(1), b(2) and c(10-14). The alpha and beta chains form an alternating ring which encloses part of the gamma chain. F(1) is attached to F(0) by a central stalk formed by the gamma and epsilon chains, while a peripheral stalk is formed by the delta and b chains.

It is found in the cell inner membrane. In terms of biological role, f(1)F(0) ATP synthase produces ATP from ADP in the presence of a proton or sodium gradient. F-type ATPases consist of two structural domains, F(1) containing the extramembraneous catalytic core and F(0) containing the membrane proton channel, linked together by a central stalk and a peripheral stalk. During catalysis, ATP synthesis in the catalytic domain of F(1) is coupled via a rotary mechanism of the central stalk subunits to proton translocation. Its function is as follows. Component of the F(0) channel, it forms part of the peripheral stalk, linking F(1) to F(0). The protein is ATP synthase subunit b 1 of Bradyrhizobium diazoefficiens (strain JCM 10833 / BCRC 13528 / IAM 13628 / NBRC 14792 / USDA 110).